A 138-amino-acid chain; its full sequence is Small ribosomal subunit protein uS11 (138 aa).

Over residues 1–12 the composition is skewed to low complexity; sequence MPPKKANAAGPK. The segment at 1–23 is disordered; the sequence is MPPKKANAAGPKKGQKTRKREKK. Positions 13 to 22 are enriched in basic residues; that stretch reads KGQKTRKREK.

This sequence belongs to the universal ribosomal protein uS11 family. In terms of assembly, part of the 30S ribosomal subunit. Interacts with proteins S7 and S18. Binds to IF-3.

Located on the platform of the 30S subunit, it bridges several disparate RNA helices of the 16S rRNA. Forms part of the Shine-Dalgarno cleft in the 70S ribosome. This chain is Small ribosomal subunit protein uS11, found in Mycobacterium leprae (strain Br4923).